The following is a 496-amino-acid chain: UDP-N-acetylmuramoyl-L-alanyl-D-glutamate--2,6-diaminopimelate ligase (496 aa).

2 residues coordinate UDP-N-acetyl-alpha-D-muramoyl-L-alanyl-D-glutamate: leucine 24 and serine 26. An ATP-binding site is contributed by 109–115 (GTNGKTS). UDP-N-acetyl-alpha-D-muramoyl-L-alanyl-D-glutamate is bound by residues 151–152 (TT), serine 178, glutamine 184, and arginine 186. N6-carboxylysine is present on lysine 218. Meso-2,6-diaminopimelate contacts are provided by residues arginine 387, 411-414 (DNPR), glycine 462, and glutamate 466. The Meso-diaminopimelate recognition motif signature appears at 411–414 (DNPR).

The protein belongs to the MurCDEF family. MurE subfamily. It depends on Mg(2+) as a cofactor. Post-translationally, carboxylation is probably crucial for Mg(2+) binding and, consequently, for the gamma-phosphate positioning of ATP.

It localises to the cytoplasm. The catalysed reaction is UDP-N-acetyl-alpha-D-muramoyl-L-alanyl-D-glutamate + meso-2,6-diaminopimelate + ATP = UDP-N-acetyl-alpha-D-muramoyl-L-alanyl-gamma-D-glutamyl-meso-2,6-diaminopimelate + ADP + phosphate + H(+). Its pathway is cell wall biogenesis; peptidoglycan biosynthesis. Catalyzes the addition of meso-diaminopimelic acid to the nucleotide precursor UDP-N-acetylmuramoyl-L-alanyl-D-glutamate (UMAG) in the biosynthesis of bacterial cell-wall peptidoglycan. This is UDP-N-acetylmuramoyl-L-alanyl-D-glutamate--2,6-diaminopimelate ligase from Pseudomonas putida (strain ATCC 47054 / DSM 6125 / CFBP 8728 / NCIMB 11950 / KT2440).